The following is a 367-amino-acid chain: Chorismate synthase (367 aa).

Arg48 provides a ligand contact to NADP(+). FMN is bound by residues 125–127, Gly290, 305–309, and Arg333; these read RAS and KPTSS.

The protein belongs to the chorismate synthase family. In terms of assembly, homotetramer. Requires FMNH2 as cofactor.

The catalysed reaction is 5-O-(1-carboxyvinyl)-3-phosphoshikimate = chorismate + phosphate. Its pathway is metabolic intermediate biosynthesis; chorismate biosynthesis; chorismate from D-erythrose 4-phosphate and phosphoenolpyruvate: step 7/7. Catalyzes the anti-1,4-elimination of the C-3 phosphate and the C-6 proR hydrogen from 5-enolpyruvylshikimate-3-phosphate (EPSP) to yield chorismate, which is the branch point compound that serves as the starting substrate for the three terminal pathways of aromatic amino acid biosynthesis. This reaction introduces a second double bond into the aromatic ring system. The chain is Chorismate synthase from Protochlamydia amoebophila (strain UWE25).